The primary structure comprises 573 residues: Sulfite reductase [NADPH] hemoprotein beta-component (573 aa).

Positions 438, 444, 483, and 487 each coordinate [4Fe-4S] cluster. Cys487 serves as a coordination point for siroheme.

Belongs to the nitrite and sulfite reductase 4Fe-4S domain family. Alpha(8)-beta(8). The alpha component is a flavoprotein, the beta component is a hemoprotein. Siroheme serves as cofactor. The cofactor is [4Fe-4S] cluster.

The catalysed reaction is hydrogen sulfide + 3 NADP(+) + 3 H2O = sulfite + 3 NADPH + 4 H(+). The protein operates within sulfur metabolism; hydrogen sulfide biosynthesis; hydrogen sulfide from sulfite (NADPH route): step 1/1. Functionally, component of the sulfite reductase complex that catalyzes the 6-electron reduction of sulfite to sulfide. This is one of several activities required for the biosynthesis of L-cysteine from sulfate. The protein is Sulfite reductase [NADPH] hemoprotein beta-component of Nitrosomonas eutropha (strain DSM 101675 / C91 / Nm57).